Reading from the N-terminus, the 130-residue chain is Small ribosomal subunit protein uS9 (130 aa).

A disordered region spans residues leucine 98 to arginine 130. Over residues lysine 111–arginine 130 the composition is skewed to basic residues.

Belongs to the universal ribosomal protein uS9 family.

The sequence is that of Small ribosomal subunit protein uS9 (rpsI) from Staphylococcus carnosus (strain TM300).